Consider the following 529-residue polypeptide: MQQRRPVRRALLSVSDKAGIVEFAQALSARGVELLSTGGTARLLAEKGLPVTEVSDYTGFPEMMDGRVKTLHPKVHGGILGRRGLDDAIMEEHQILPIDMVVVNLYPFAQTVAREGCSLEDAVENIDIGGPTMVRSAAKNHKDVAIVVKSSDYDAIIKEMDANEGSLMLATRFDLAIKAFEHTAAYDSMIANYFGSMVPAYHGESKEAAGRFPRTLNLNFIKKQDMRYGENSHQQAAFYIEENVKEASVATATQVQGKALSYNNIADTDAALECVKEFAEPACVIVKHANPCGVAVSNSILDAYDRAYKTDPTSAFGGIIAFNRELDAETAQAIISRQFVEVIIAPSASEEALKITAAKQNVRVLICGQWGERAPGLDFKRVNGGLLVQDRDLGIVGAEELRVVTKRQPTEQELRDALFCWKVAKFVKSNAIVYAKNNMTIGIGAGQMSRVYSAKIAGIKAADEGLEVKGSSMASDAFFPFRDGIDAAAAAGVTCVIQPGGSIRDDEVIAAADEHGIAMLFTDMRHFRH.

The MGS-like domain maps to 1-148 (MQQRRPVRRA…KNHKDVAIVV (148 aa)). An N6-acetyllysine modification is found at K287.

It belongs to the PurH family.

The catalysed reaction is (6R)-10-formyltetrahydrofolate + 5-amino-1-(5-phospho-beta-D-ribosyl)imidazole-4-carboxamide = 5-formamido-1-(5-phospho-D-ribosyl)imidazole-4-carboxamide + (6S)-5,6,7,8-tetrahydrofolate. The enzyme catalyses IMP + H2O = 5-formamido-1-(5-phospho-D-ribosyl)imidazole-4-carboxamide. It participates in purine metabolism; IMP biosynthesis via de novo pathway; 5-formamido-1-(5-phospho-D-ribosyl)imidazole-4-carboxamide from 5-amino-1-(5-phospho-D-ribosyl)imidazole-4-carboxamide (10-formyl THF route): step 1/1. Its pathway is purine metabolism; IMP biosynthesis via de novo pathway; IMP from 5-formamido-1-(5-phospho-D-ribosyl)imidazole-4-carboxamide: step 1/1. The sequence is that of Bifunctional purine biosynthesis protein PurH from Escherichia coli O127:H6 (strain E2348/69 / EPEC).